The sequence spans 201 residues: Putative pseudouridine methyltransferase (201 aa).

S-adenosyl-L-methionine is bound by residues methionine 132 and cysteine 186.

Belongs to the methyltransferase superfamily. TrmY family.

It localises to the cytoplasm. The sequence is that of Putative pseudouridine methyltransferase from Vibrio cholerae serotype O1 (strain ATCC 39315 / El Tor Inaba N16961).